Consider the following 682-residue polypeptide: Histone deacetylase 18 (682 aa).

Residues 59-382 (KVGLVYDETM…SLACVQVLLE (324 aa)) form a histone deacetylase region. Residue His191 is the Proton donor/acceptor of the active site. Zn(2+) contacts are provided by Asp231, His233, and Asp324. Residues 430–608 (SAERNSADAL…DKELQEDRSR (179 aa)) are a coiled coil.

It belongs to the histone deacetylase family. HD type 2 subfamily. It depends on Zn(2+) as a cofactor. In terms of tissue distribution, expressed in roots, stems, young rosette leaves, flowers and siliques.

The protein localises to the nucleus. The protein resides in the cytoplasm. The catalysed reaction is N(6)-acetyl-L-lysyl-[histone] + H2O = L-lysyl-[histone] + acetate. Functionally, responsible for the deacetylation of lysine residues on the N-terminal part of the core histones (H2A, H2B, H3 and H4). Histone deacetylation gives a tag for epigenetic repression and plays an important role in transcriptional regulation, cell cycle progression and developmental events. Histone deacetylases act via the formation of large multiprotein complexes. Required for appropriate cellular patterning in the root epidermis. Involved in the differentiation of hair and non-hair cells in the root epidermis. Is not directly involved in the regulation of the expression of pattern genes. Regulates the transcription of certain kinase genes, which are components of a positional information relay system, by changing their histone acetylation status. The chain is Histone deacetylase 18 from Arabidopsis thaliana (Mouse-ear cress).